A 962-amino-acid polypeptide reads, in one-letter code: Leucine--tRNA ligase (962 aa).

Residues 40–51 (PYPSGAGLHVGH) carry the 'HIGH' region motif. Positions 548–570 (SRKLSGQHDEPNSNVTPSAVEGS) are disordered. Positions 737–741 (KMSKS) match the 'KMSKS' region motif. Lys-740 lines the ATP pocket.

The protein belongs to the class-I aminoacyl-tRNA synthetase family.

Its subcellular location is the cytoplasm. It catalyses the reaction tRNA(Leu) + L-leucine + ATP = L-leucyl-tRNA(Leu) + AMP + diphosphate. The protein is Leucine--tRNA ligase of Christiangramia forsetii (strain DSM 17595 / CGMCC 1.15422 / KT0803) (Gramella forsetii).